We begin with the raw amino-acid sequence, 499 residues long: Glycerol kinase (499 aa).

T12 serves as a coordination point for ADP. ATP is bound by residues T12, T13, and S14. T12 is a binding site for sn-glycerol 3-phosphate. ADP is bound at residue R16. Sn-glycerol 3-phosphate contacts are provided by R82, E83, Y134, and D245. Positions 82, 83, 134, 245, and 246 each coordinate glycerol. Residues T267 and G311 each contribute to the ADP site. Residues T267, G311, Q315, and G412 each coordinate ATP. Positions 412 and 416 each coordinate ADP.

The protein belongs to the FGGY kinase family.

It carries out the reaction glycerol + ATP = sn-glycerol 3-phosphate + ADP + H(+). Its pathway is polyol metabolism; glycerol degradation via glycerol kinase pathway; sn-glycerol 3-phosphate from glycerol: step 1/1. Its activity is regulated as follows. Inhibited by fructose 1,6-bisphosphate (FBP). Its function is as follows. Key enzyme in the regulation of glycerol uptake and metabolism. Catalyzes the phosphorylation of glycerol to yield sn-glycerol 3-phosphate. In Acidiphilium cryptum (strain JF-5), this protein is Glycerol kinase.